The sequence spans 233 residues: 2,3-bisphosphoglycerate-dependent phosphoglycerate mutase (233 aa).

Substrate contacts are provided by residues 8–15 (RHGQSLWN), 21–22 (TG), Arg60, 116–119 (ERYY), Lys127, 143–144 (RR), and 187–188 (GN). Residue His9 is the Tele-phosphohistidine intermediate of the active site. The active-site Proton donor/acceptor is Glu116.

The protein belongs to the phosphoglycerate mutase family. BPG-dependent PGAM subfamily.

It catalyses the reaction (2R)-2-phosphoglycerate = (2R)-3-phosphoglycerate. Its pathway is carbohydrate degradation; glycolysis; pyruvate from D-glyceraldehyde 3-phosphate: step 3/5. Functionally, catalyzes the interconversion of 2-phosphoglycerate and 3-phosphoglycerate. The chain is 2,3-bisphosphoglycerate-dependent phosphoglycerate mutase from Gloeothece citriformis (strain PCC 7424) (Cyanothece sp. (strain PCC 7424)).